The chain runs to 409 residues: Elongation factor Tu, plastid (409 aa).

One can recognise a tr-type G domain in the interval 10–214 (KPHINIGTIG…SVDSYIPTPV (205 aa)). Residues 19–26 (GHVDHGKT) are G1. Residue 19 to 26 (GHVDHGKT) participates in GTP binding. Thr26 contributes to the Mg(2+) binding site. Residues 60-64 (GITIN) form a G2 region. The interval 81–84 (DCPG) is G3. Residues 81 to 85 (DCPGH) and 136 to 139 (NKED) each bind GTP. The G4 stretch occupies residues 136–139 (NKED). The interval 174-176 (SAL) is G5.

Belongs to the TRAFAC class translation factor GTPase superfamily. Classic translation factor GTPase family. EF-Tu/EF-1A subfamily.

The protein resides in the plastid. It catalyses the reaction GTP + H2O = GDP + phosphate + H(+). Functionally, GTP hydrolase that promotes the GTP-dependent binding of aminoacyl-tRNA to the A-site of ribosomes during protein biosynthesis. This chain is Elongation factor Tu, plastid (tufA), found in Helicosporidium sp. subsp. Simulium jonesii (Green alga).